The chain runs to 1089 residues: Protein phosphatase 1 regulatory subunit 3A (1089 aa).

A disordered region spans residues 32-57; the sequence is KATFKPGFSPQPSRRGSGSSEDMYLD. Low complexity predominate over residues 37–51; sequence PGFSPQPSRRGSGSS. A phosphoserine; by GSK3 mark is found at Ser-40 and Ser-44. Phosphoserine occurs at positions 48 and 51. The residue at position 58 (Thr-58) is a Phosphothreonine. The short motif at 64 to 67 is the PP1-binding motif element; that stretch reads RRVS. Ser-67 carries the phosphoserine; by PKA modification. Residues 123–231 enclose the CBM21 domain; that stretch reads EQLQVQKAVL…NNNGTNYILV (109 aa). 3 disordered regions span residues 385–420, 479–501, and 566–649; these read FYHS…GDTS, HGDS…KVDN, and PCPS…SDIA. Polar residues predominate over residues 581 to 600; it reads SGSNLEPGTSDLSSPRNFSP. Positions 602 to 614 are enriched in basic and acidic residues; it reads TDDHLFQADRENS. Polar residues predominate over residues 615 to 625; it reads DSSNPENQNMN. Ser-821 bears the Phosphoserine mark. Residues 949 to 968 form a disordered region; it reads IMKSGSGGERGGGPILQQKE. Gly residues predominate over residues 953–962; sequence GSGGERGGGP. The chain crosses the membrane as a helical span at residues 1047-1067; that stretch reads LLFLIFLATVYYYDLMIGLAF.

In terms of assembly, interacts with PPP1CC catalytic subunit of PP1, and associates with glycogen. In terms of processing, phosphorylation at Ser-48 by ISPK stimulates the dephosphorylation of glycogen synthase and phosphorylase kinase. Skeletal muscle and heart.

Its subcellular location is the membrane. In terms of biological role, seems to act as a glycogen-targeting subunit for PP1. PP1 is essential for cell division, and participates in the regulation of glycogen metabolism, muscle contractility and protein synthesis. Plays an important role in glycogen synthesis but is not essential for insulin activation of glycogen synthase. The protein is Protein phosphatase 1 regulatory subunit 3A (Ppp1r3a) of Mus musculus (Mouse).